Reading from the N-terminus, the 132-residue chain is Small ribosomal subunit protein uS8c (132 aa).

It belongs to the universal ribosomal protein uS8 family. Part of the 30S ribosomal subunit.

The protein localises to the plastid. It localises to the chloroplast. Functionally, one of the primary rRNA binding proteins, it binds directly to 16S rRNA central domain where it helps coordinate assembly of the platform of the 30S subunit. This chain is Small ribosomal subunit protein uS8c (rps8), found in Liriodendron tulipifera (Tuliptree).